A 144-amino-acid chain; its full sequence is Transcription antitermination protein NusB (144 aa).

Belongs to the NusB family.

Its function is as follows. Involved in transcription antitermination. Required for transcription of ribosomal RNA (rRNA) genes. Binds specifically to the boxA antiterminator sequence of the ribosomal RNA (rrn) operons. The protein is Transcription antitermination protein NusB of Histophilus somni (strain 129Pt) (Haemophilus somnus).